The sequence spans 90 residues: MNDSVKTSLKRTLVGKVVSNKMDKTVTVLVEHRVKHPIYGKYVVRSKKYHAHDEANTYNEGDLVEIQETRPVSKTKAWTVSRLVEAARVI.

This sequence belongs to the universal ribosomal protein uS17 family. In terms of assembly, part of the 30S ribosomal subunit.

One of the primary rRNA binding proteins, it binds specifically to the 5'-end of 16S ribosomal RNA. This is Small ribosomal subunit protein uS17 from Burkholderia thailandensis (strain ATCC 700388 / DSM 13276 / CCUG 48851 / CIP 106301 / E264).